The chain runs to 247 residues: Small ribosomal subunit protein uS3 (247 aa).

The KH type-2 domain occupies 18 to 87; the sequence is IDEYLAKRFY…NPQITVRRVE (70 aa). The disordered stretch occupies residues 226-247; sequence QQGEVVGEAPNTPLEEQGQKQG.

It belongs to the universal ribosomal protein uS3 family. In terms of assembly, part of the 30S ribosomal subunit.

Its function is as follows. Binds the lower part of the 30S subunit head. This chain is Small ribosomal subunit protein uS3, found in Hyperthermus butylicus (strain DSM 5456 / JCM 9403 / PLM1-5).